Consider the following 224-residue polypeptide: Large ribosomal subunit protein uL4 (224 aa).

The interval 52 to 109 is disordered; the sequence is AAARQGTHSTKTRGDVSGGGRKPYRQKGTGRARQGSTRTPQFTGGGVVHGPKPRDYSQ.

This sequence belongs to the universal ribosomal protein uL4 family. Part of the 50S ribosomal subunit.

Functionally, one of the primary rRNA binding proteins, this protein initially binds near the 5'-end of the 23S rRNA. It is important during the early stages of 50S assembly. It makes multiple contacts with different domains of the 23S rRNA in the assembled 50S subunit and ribosome. Its function is as follows. Forms part of the polypeptide exit tunnel. This Mycobacterium ulcerans (strain Agy99) protein is Large ribosomal subunit protein uL4.